We begin with the raw amino-acid sequence, 815 residues long: Calpain-3 (815 aa).

The disordered stretch occupies residues 7–36; sequence ASVAPRTAAEPRSPGPVPHPAQSKATEAGG. A Calpain catalytic domain is found at 74–417; it reads LYVDPEFPPD…FTKLEICNLT (344 aa). Residues Cys-129, His-334, and Asn-358 contribute to the active site. The segment at 418–586 is domain III; that stretch reads ADALQSDKLQ…KRNLSEEVEN (169 aa). The tract at residues 587 to 649 is linker; sequence TISVDRPVPI…QESEEQQQFR (63 aa). Residues 605–646 are disordered; sequence SNKELGVDQESEEGKGKTSPDKQEQSPQPQPGSSDQESEEQQ. A compositionally biased stretch (basic and acidic residues) spans 616–628; the sequence is EEGKGKTSPDKQE. Positions 629–639 are enriched in low complexity; the sequence is QSPQPQPGSSD. EF-hand domains are found at residues 643–677, 686–719, 716–751, and 781–815; these read EEQQ…VVNK, FTLE…NKIK, NKIK…AGFH, and VRLE…TMYA. The domain IV stretch occupies residues 650 to 815; sequence NIFKQIAGDD…LEWLQLTMYA (166 aa). Positions 656, 659, 661, 666, 699, 701, 703, 705, 710, 729, 731, 733, 735, 740, 794, 796, 798, and 800 each coordinate Ca(2+).

Belongs to the peptidase C2 family. In terms of assembly, homodimer; via EF-hand domain 4. Interacts with TTN/titin. Interacts with CMYA5; this interaction, which results in CMYA5 proteolysis, may protect CAPN3 from autolysis. Interacts with SIMC1. Interacts with UTP25; the interaction is required for CAPN3 translocation to the nucleolus.

The protein localises to the cytoplasm. It is found in the nucleus. Its subcellular location is the nucleolus. It catalyses the reaction Broad endopeptidase activity.. Activated by micromolar concentrations of calcium and inhibited by calpastatin. Calcium-regulated non-lysosomal thiol-protease. Proteolytically cleaves CTBP1. Mediates, with UTP25, the proteasome-independent degradation of p53/TP53. In Macaca fascicularis (Crab-eating macaque), this protein is Calpain-3 (CAPN3).